The chain runs to 354 residues: MTTMSRSFGRSDLANGAHRDVAVWLLACCFMVAVMVLLGGLTRLTHSGLSMVEWEPIRGIIPPLNDTDWQLFFEKYKQTPEYIKVNAGMSLAEFKGIFWLEYIHRVWGRLIGVVFGLPFLWLALSGRIGRAMVPRLAGVFLLGAAQGGMGWFMVKSGLVDNPAVSHYRLTAHLALAFLIHGWMFWLALDILADHRSTRRRAHGDVGAVRSWMLGLTGLVIVTLLFGGLVAGLKAGLIYNTWPLMDGAIVPKDLFPEGFHSLFEDIKTVQFGHRTLAEITIVVALVGWFRTRARLGTQTPAAIHAVGLMALLQVGLGIGTLVMVVPVWLASAHQMGAMALLTLCLWALHDLGRRI.

The next 8 helical transmembrane spans lie at 21 to 41 (VAVW…LGGL), 106 to 126 (VWGR…ALSG), 139 to 159 (VFLL…SGLV), 171 to 191 (AHLA…LDIL), 212 to 232 (MLGL…VAGL), 268 to 288 (VQFG…VGWF), 304 to 324 (AVGL…VMVV), and 326 to 346 (VWLA…CLWA). Heme is bound at residue histidine 272. Histidine 332 is a heme binding site.

The protein belongs to the COX15/CtaA family. Type 2 subfamily. As to quaternary structure, interacts with CtaB. Heme b is required as a cofactor.

Its subcellular location is the cell membrane. It catalyses the reaction Fe(II)-heme o + 2 A + H2O = Fe(II)-heme a + 2 AH2. It participates in porphyrin-containing compound metabolism; heme A biosynthesis; heme A from heme O: step 1/1. In terms of biological role, catalyzes the conversion of heme O to heme A by two successive hydroxylations of the methyl group at C8. The first hydroxylation forms heme I, the second hydroxylation results in an unstable dihydroxymethyl group, which spontaneously dehydrates, resulting in the formyl group of heme A. The polypeptide is Heme A synthase (Paramagnetospirillum magneticum (strain ATCC 700264 / AMB-1) (Magnetospirillum magneticum)).